A 188-amino-acid chain; its full sequence is ATP synthase subunit p18, mitochondrial (188 aa).

A mitochondrion-targeting transit peptide spans 1 to 18 (MMRRVYSPVFCSVAAARF). 3 PPR repeats span residues 36–70 (TNTA…PPDI), 75–109 (ATLQ…EMQH), and 116–146 (NEES…METE).

In terms of assembly, F-type ATPases have 2 components, F(1) - the catalytic core - and F(o) - the membrane proton channel. F(1) has five subunits: alpha(3), beta(3), gamma(1), delta(1), epsilon(1), plus the additional subunit P18 (Tb427.05.1710) that is not present in F(1)F(o) ATP synthase from metazoa. Subunit P18 (Tb927.5.1710) interacts with the alpha subunit with a 1:1 stoichiometry; the interaction is direct. Subunit gamma is part of the central stalk. F(o) has three main subunits: a, b and c. The trypanosomal ATPase complex contains additional subunits that are not present in the F(1)F(o) ATP synthase from metazoa.

The protein localises to the mitochondrion. Its subcellular location is the mitochondrion inner membrane. Mitochondrial membrane ATP synthase (F(1)F(o) ATP synthase) produces ATP from ADP in the presence of a proton gradient across the membrane which is generated by electron transport complexes of the respiratory chain. F-type ATPases consist of two structural domains, F(1) - containing the extramembraneous catalytic core, and F(o) - containing the membrane proton channel, linked together by a central stalk and a peripheral stalk. During catalysis, ATP synthesis in the catalytic domain of F(1) is coupled via a rotary mechanism of the central stalk subunits to proton translocation. Subunits alpha and beta form the catalytic core in F(1). Rotation of the central stalk against the surrounding alpha(3)beta(3) subunits leads to hydrolysis of ATP in three separate catalytic sites on the beta subunits. Contrary to the procyclic, insect form that requires F(1)F(o) ATP synthase for ATP synthesis, the bloodstream form relies on ATP hydrolysis by F(1)F(o) ATP synthase to maintain its mitochondrial membrane potential. In Trypanosoma brucei brucei, this protein is ATP synthase subunit p18, mitochondrial.